The primary structure comprises 391 residues: Heme A synthase (391 aa).

Helical transmembrane passes span 37 to 57, 121 to 141, 152 to 172, 186 to 206, 229 to 249, 298 to 318, 332 to 352, and 354 to 374; these read IRLW…VGGL, RQLG…FLAA, LLAL…MVAS, LATH…QALL, TTVL…VAGI, FLHR…WIFG, LLAM…LSAA, and WQVA…ILHA. A heme-binding site is contributed by H300. Heme is bound at residue H360.

It belongs to the COX15/CtaA family. Type 2 subfamily. Interacts with CtaB. The cofactor is heme b.

Its subcellular location is the cell membrane. The enzyme catalyses Fe(II)-heme o + 2 A + H2O = Fe(II)-heme a + 2 AH2. The protein operates within porphyrin-containing compound metabolism; heme A biosynthesis; heme A from heme O: step 1/1. Functionally, catalyzes the conversion of heme O to heme A by two successive hydroxylations of the methyl group at C8. The first hydroxylation forms heme I, the second hydroxylation results in an unstable dihydroxymethyl group, which spontaneously dehydrates, resulting in the formyl group of heme A. This Cereibacter sphaeroides (strain KD131 / KCTC 12085) (Rhodobacter sphaeroides) protein is Heme A synthase.